A 617-amino-acid chain; its full sequence is MFRTAVMMAASLALTGAVVAHAYYLKHQFYPTVVYLTKSSPSMAVLYIQAFVLVFLLGKVMGKVFFGQLRAAEMEHLLERSWYAVTETCLAFTVFRDDFSPRFVALFTLLLFLKCFHWLAEDRVDFMERSPNISWLFHCRIVSLMFLLGILDFLFVSHAYHSILTRGASVQLVFGFEYAILMTMVLTIFIKYVLHSVDLQSENPWDNKAVYMLYTELFTGFIKVLLYMAFMTIMIKVHTFPLFAIRPMYLAMRQFKKAVTDAIMSRRAIRNMNTLYPDATPEELQAMDNVCIICREEMVTGAKRLPCNHIFHTSCLRSWFQRQQTCPTCRMDVLRASLPAQSPPPPEPADQGPPPAPHPPPLLPQPPNFPQGLLPPFPPGMFPLWPPMGPFPPVPPPPSSGEAVAPPSTSAAALSRPSGAATTTAAGTSATAASATASGPGSGSAPEAGPAPGFPFPPPWMGMPLPPPFAFPPMPVPPAGFAGLTPEELRALEGHERQHLEARLQSLRNIHTLLDAAMLQINQYLTVLASLGPPRPATSVNSTEETATTVVAAASSTSIPSSEATTPTPGASPPAPEMERPPAPESVGTEEMPEDGEPDAAELRRRRLQKLESPVAH.

The Cytoplasmic portion of the chain corresponds to M1–T4. The tract at residues M1–A84 is necessary and sufficient for SEL1L interaction. The interval M1–A251 is involved in FAM8A1 interaction. A helical transmembrane segment spans residues A5–L25. The Lumenal portion of the chain corresponds to K26–P41. Residues S42–G62 traverse the membrane as a helical segment. Over K63–D98 the chain is Cytoplasmic. The helical transmembrane segment at F99–L119 threads the bilayer. Residues A120 to R140 are Lumenal-facing. Residues I141 to H161 form a helical membrane-spanning segment. Topologically, residues S162 to S169 are cytoplasmic. The helical transmembrane segment at V170–I190 threads the bilayer. Residues K191–V224 are Lumenal-facing. A helical membrane pass occupies residues L225–I245. The interaction with p53/TP53 stretch occupies residues K236 to R270. Topologically, residues R246–H617 are cytoplasmic. Zn(2+) contacts are provided by C291, C294, C307, H309, H312, C315, C326, and C329. An RING-type; atypical zinc finger spans residues C291–R330. 3 disordered regions span residues S337–P375, P393–G453, and R535–H617. Residues Q341–P375 are compositionally biased toward pro residues. The segment covering P417–A451 has biased composition (low complexity). The tract at residues G480–R535 is HAF-H domain; necessary to form higher-order Hrd1 complexes. Over residues A537–P569 the composition is skewed to low complexity. The span at E591 to A600 shows a compositional bias: acidic residues. S613 is modified (phosphoserine).

This sequence belongs to the HRD1 family. In terms of assembly, homodimer. Interacts with p53/TP53. Interacts with HTT. Component of the HRD1 complex, which comprises at least SYNV1/HRD1, DERL1/2, FAM8A1, HERPUD1/HERP, OS9, SEL1L and UBE2J1. FAM8A1 is stabilized by interaction with SYNV1, which prevents its proteasomal degradation. OS9 and UBE2J1 recruitment to the complex may be mediated by SEL1L. SYNV1 assembles with SEL1L and FAM8A1 through its transmembrane domains, but interaction with its cytoplasmic domain is required to confer stability to FAM8A1 and enhance recruitment of HERPUD1. The HRD1 complex also associates with VIMP and may transfer misfolded proteins from the endoplasmic reticulum to VCP. May form a complex with ERLEC1, HSPA5, OS9 and SEL1L. Interacts with VCP. Interacts with UBXN6. Interacts with BAG6. Interacts with NFE2L1. Interacts (via N-terminus) with components of the pre-B cell receptor, including IGLL1 and VPREB1. Interacts with CREB3L3; this interaction leads to CREB3L3 ubiquitination and proteasomal degradation. Not N-glycosylated. Post-translationally, auto-ubiquitinated. Deubiquitinated by USP19. In terms of tissue distribution, ubiquitously expressed, with highest levels in liver and kidney (at protein level). Up-regulated in synovial tissues from patients with rheumatoid arthritis (at protein level).

The protein resides in the endoplasmic reticulum membrane. The catalysed reaction is S-ubiquitinyl-[E2 ubiquitin-conjugating enzyme]-L-cysteine + [acceptor protein]-L-lysine = [E2 ubiquitin-conjugating enzyme]-L-cysteine + N(6)-ubiquitinyl-[acceptor protein]-L-lysine.. Its pathway is protein modification; protein ubiquitination. Its function is as follows. E3 ubiquitin-protein ligase which accepts ubiquitin specifically from endoplasmic reticulum-associated UBC7 E2 ligase and transfers it to substrates, promoting their degradation. Component of the endoplasmic reticulum quality control (ERQC) system also called ER-associated degradation (ERAD) involved in ubiquitin-dependent degradation of misfolded endoplasmic reticulum proteins. Also promotes the degradation of normal but naturally short-lived proteins such as SGK. Protects cells from ER stress-induced apoptosis. Protects neurons from apoptosis induced by polyglutamine-expanded huntingtin (HTT) or unfolded GPR37 by promoting their degradation. Sequesters p53/TP53 in the cytoplasm and promotes its degradation, thereby negatively regulating its biological function in transcription, cell cycle regulation and apoptosis. Mediates the ubiquitination and subsequent degradation of cytoplasmic NFE2L1. During the early stage of B cell development, required for degradation of the pre-B cell receptor (pre-BCR) complex, hence supporting further differentiation into mature B cells. In Homo sapiens (Human), this protein is E3 ubiquitin-protein ligase synoviolin.